The primary structure comprises 525 residues: GMP synthase [glutamine-hydrolyzing] (525 aa).

The Glutamine amidotransferase type-1 domain occupies 8-206 (PLLILDFGSQ…VVDICKASTD (199 aa)). Catalysis depends on Cys85, which acts as the Nucleophile. Catalysis depends on residues His180 and Glu182. Residues 207–400 (WTPEHIIDEA…LGLPHDMVYR (194 aa)) enclose the GMPS ATP-PPase domain. 234 to 240 (SGGVDSS) provides a ligand contact to ATP.

Homodimer.

The enzyme catalyses XMP + L-glutamine + ATP + H2O = GMP + L-glutamate + AMP + diphosphate + 2 H(+). Its pathway is purine metabolism; GMP biosynthesis; GMP from XMP (L-Gln route): step 1/1. Its function is as follows. Catalyzes the synthesis of GMP from XMP. The polypeptide is GMP synthase [glutamine-hydrolyzing] (Legionella pneumophila (strain Lens)).